The following is a 765-amino-acid chain: Amyloid beta precursor like protein 2 (765 aa).

An N-terminal signal peptide occupies residues 1-31 (MAATGTAAAAATGKLLVLLLLGLTAPAAALA). Over 32 to 695 (GYIEALAANA…LREDFSLSSS (664 aa)) the chain is Extracellular. A GFLD subdomain region spans residues 46-139 (AVAEPQIAMF…PFKCLVGEFV (94 aa)). In terms of domain architecture, E1 spans 46 to 205 (AVAEPQIAMF…HGTEYVCCPQ (160 aa)). 6 cysteine pairs are disulfide-bonded: cysteine 56–cysteine 80, cysteine 91–cysteine 133, cysteine 116–cysteine 123, cysteine 149–cysteine 203, cysteine 160–cysteine 190, and cysteine 174–cysteine 202. A cuBD subdomain region spans residues 147–205 (ENCQFFHQERMEVCEKHQRWHTVVKEACLTEGMTLYSYGMLLPCGVDQFHGTEYVCCPQ). 3 residues coordinate Cu cation: histidine 163, histidine 167, and tyrosine 184. Positions 211–301 (SDSTMSKEEE…EPSSDGTISD (91 aa)) are disordered. At serine 216 the chain carries Phosphoserine. 2 stretches are compositionally biased toward acidic residues: residues 218-231 (EEEE…EEDY) and 240-271 (TEAD…EVVE). The span at 272–284 (DRDYYYDSFKGDD) shows a compositional bias: basic and acidic residues. One can recognise a BPTI/Kunitz inhibitor domain in the interval 308 to 366 (VKAVCSQEAMTGPCRAVMPRWYFDLSKGKCVRFIYGGCGGNRNNFESEDYCMAVCKTMI). 3 cysteine pairs are disulfide-bonded: cysteine 312/cysteine 362, cysteine 321/cysteine 345, and cysteine 337/cysteine 358. In terms of domain architecture, E2 spans 375–566 (DVDVYFETSA…QEIQEEIDEL (192 aa)). The residue at position 592 (serine 592) is a Phosphoserine. Residues 597–616 (EIPPFHPFHPFPSLSENEDT) form a disordered region. A glycan (O-linked (Xyl...) (chondroitin sulfate) serine) is linked at serine 628. Residues 696 to 718 (ALIGLLVIAVAIATVIVISLVML) form a helical membrane-spanning segment. Residues 719–765 (RKRQYGTISHGIVEVHPMLTPEERHLNKMQNHGYENPTYKYLEQMQI) lie on the Cytoplasmic side of the membrane. The interval 751-765 (GYENPTYKYLEQMQI) is interaction with DAB2. The NPXY motif signature appears at 752 to 757 (YENPTY).

It belongs to the APP family. Interacts with CPEB1. Interacts (via NPXY motif) with DAB2 (via PID domain); the interaction is impaired by tyrosine phosphorylation of the NPXY motif. Interacts (via cytoplasmic domain) with APBB2/FE65L. Interacts (via intracellular domain) with APBB3/FE65L2.

The protein localises to the membrane. Functionally, may play a role in the regulation of hemostasis. The soluble form may have inhibitory properties towards coagulation factors. May interact with cellular G-protein signaling pathways. May bind to the DNA 5'-GTCACATG-3'(CDEI box). Inhibits trypsin, chymotrypsin, plasmin, factor XIA and plasma and glandular kallikrein. Modulates the Cu/Zn nitric oxide-catalyzed autodegradation of GPC1 heparan sulfate side chains in fibroblasts. The protein is Amyloid beta precursor like protein 2 of Rattus norvegicus (Rat).